Consider the following 406-residue polypeptide: Argininosuccinate synthase (406 aa).

Residues 11–19 (AYSGGLDTS) and Ala-38 contribute to the ATP site. Residues Tyr-91 and Ser-96 each coordinate L-citrulline. Residue Gly-121 participates in ATP binding. L-aspartate-binding residues include Thr-123, Asn-127, and Asp-128. Asn-127 provides a ligand contact to L-citrulline. Positions 131, 181, 190, 266, and 278 each coordinate L-citrulline.

This sequence belongs to the argininosuccinate synthase family. Type 1 subfamily. Homotetramer.

The protein resides in the cytoplasm. The enzyme catalyses L-citrulline + L-aspartate + ATP = 2-(N(omega)-L-arginino)succinate + AMP + diphosphate + H(+). It functions in the pathway amino-acid biosynthesis; L-arginine biosynthesis; L-arginine from L-ornithine and carbamoyl phosphate: step 2/3. The polypeptide is Argininosuccinate synthase (Campylobacter jejuni subsp. jejuni serotype O:2 (strain ATCC 700819 / NCTC 11168)).